Here is a 167-residue protein sequence, read N- to C-terminus: uncharacterized protein (167 aa).

Positions 1 to 10 (MPLRRCRAWR) are enriched in basic residues. The disordered stretch occupies residues 1-23 (MPLRRCRAWRGHSQPGTGSRSNE).

This is an uncharacterized protein from Sinorhizobium fredii (strain NBRC 101917 / NGR234).